The sequence spans 485 residues: Glutamate--tRNA ligase (485 aa).

A 'HIGH' region motif is present at residues 11 to 21 (PSPTGHLHIGN). The short motif at 252–256 (KLSKR) is the 'KMSKS' region element. Lysine 255 lines the ATP pocket.

This sequence belongs to the class-I aminoacyl-tRNA synthetase family. Glutamate--tRNA ligase type 1 subfamily. In terms of assembly, monomer.

The protein localises to the cytoplasm. The enzyme catalyses tRNA(Glu) + L-glutamate + ATP = L-glutamyl-tRNA(Glu) + AMP + diphosphate. Its function is as follows. Catalyzes the attachment of glutamate to tRNA(Glu) in a two-step reaction: glutamate is first activated by ATP to form Glu-AMP and then transferred to the acceptor end of tRNA(Glu). In Bacillus cytotoxicus (strain DSM 22905 / CIP 110041 / 391-98 / NVH 391-98), this protein is Glutamate--tRNA ligase.